The following is a 234-amino-acid chain: 2,3,4,5-tetrahydropyridine-2,6-dicarboxylate N-acetyltransferase (234 aa).

The protein belongs to the transferase hexapeptide repeat family. DapH subfamily.

The catalysed reaction is (S)-2,3,4,5-tetrahydrodipicolinate + acetyl-CoA + H2O = L-2-acetamido-6-oxoheptanedioate + CoA. It participates in amino-acid biosynthesis; L-lysine biosynthesis via DAP pathway; LL-2,6-diaminopimelate from (S)-tetrahydrodipicolinate (acetylase route): step 1/3. Its function is as follows. Catalyzes the transfer of an acetyl group from acetyl-CoA to tetrahydrodipicolinate. The polypeptide is 2,3,4,5-tetrahydropyridine-2,6-dicarboxylate N-acetyltransferase (Leuconostoc citreum (strain KM20)).